Reading from the N-terminus, the 169-residue chain is Small ribosomal subunit protein uS5 (169 aa).

The 64-residue stretch at 14–77 (LQEKLVAVRR…EQARKNMRKV (64 aa)) folds into the S5 DRBM domain.

This sequence belongs to the universal ribosomal protein uS5 family. In terms of assembly, part of the 30S ribosomal subunit. Contacts proteins S4 and S8.

With S4 and S12 plays an important role in translational accuracy. Its function is as follows. Located at the back of the 30S subunit body where it stabilizes the conformation of the head with respect to the body. The chain is Small ribosomal subunit protein uS5 from Methylococcus capsulatus (strain ATCC 33009 / NCIMB 11132 / Bath).